The chain runs to 406 residues: Succinylornithine transaminase (406 aa).

K252 is subject to N6-(pyridoxal phosphate)lysine.

It belongs to the class-III pyridoxal-phosphate-dependent aminotransferase family. AstC subfamily. Pyridoxal 5'-phosphate is required as a cofactor.

It carries out the reaction N(2)-succinyl-L-ornithine + 2-oxoglutarate = N-succinyl-L-glutamate 5-semialdehyde + L-glutamate. It participates in amino-acid degradation; L-arginine degradation via AST pathway; L-glutamate and succinate from L-arginine: step 3/5. Catalyzes the transamination of N(2)-succinylornithine and alpha-ketoglutarate into N(2)-succinylglutamate semialdehyde and glutamate. Can also act as an acetylornithine aminotransferase. This Escherichia coli (strain 55989 / EAEC) protein is Succinylornithine transaminase.